We begin with the raw amino-acid sequence, 586 residues long: GRB2-associated-binding protein 3 (586 aa).

One can recognise a PH domain in the interval aspartate 5–asparagine 117. 2 disordered regions span residues alanine 149 to threonine 171 and serine 281 to glutamate 335. The segment covering threonine 283–serine 292 has biased composition (polar residues). The segment covering histidine 316–serine 326 has biased composition (basic and acidic residues). Serine 344 carries the post-translational modification Phosphoserine. The disordered stretch occupies residues glycine 401–leucine 453. Serine 482 carries the phosphoserine modification.

Belongs to the GAB family. As to quaternary structure, interacts with PIK3R/p85, SHP2 and GRAP2/MONA. May interact with Grb2. Post-translationally, phosphorylated on tyrosine residue(s) after macrophage colony-stimulating factor (M-CSF) receptor stimulation.

This Homo sapiens (Human) protein is GRB2-associated-binding protein 3 (GAB3).